Here is a 126-residue protein sequence, read N- to C-terminus: Antimicrobial protein 1 (126 aa).

The first 24 residues, 1–24 (MRSSLLLGLTVVLLLGVTVPPCMA), serve as a signal peptide directing secretion.

As to expression, strongly expressed in gills, hemocytes and reproductive tract, with weaker expression in muscle, heart and digestive tract. Not detected in eyes and hepatopancreas (at protein level).

It is found in the secreted. Has antibacterial activity against the Gram-positive bacteria E.coli (MIC&lt;50 ug/ml) and P.aeruginosa (MIC&lt;25 ug/ml), and the Gram-negative bacteria S.aureus (MIC&lt;100 ug/ml) and S.pyogenes (MIC&lt;50 ug/ml). The protein is Antimicrobial protein 1 of Scylla serrata (Mud crab).